The chain runs to 284 residues: 4-diphosphocytidyl-2-C-methyl-D-erythritol kinase (284 aa).

Lys14 is a catalytic residue. 98 to 108 (PMGGGIGGGSS) contributes to the ATP binding site. Asp140 is an active-site residue.

This sequence belongs to the GHMP kinase family. IspE subfamily.

It carries out the reaction 4-CDP-2-C-methyl-D-erythritol + ATP = 4-CDP-2-C-methyl-D-erythritol 2-phosphate + ADP + H(+). It participates in isoprenoid biosynthesis; isopentenyl diphosphate biosynthesis via DXP pathway; isopentenyl diphosphate from 1-deoxy-D-xylulose 5-phosphate: step 3/6. In terms of biological role, catalyzes the phosphorylation of the position 2 hydroxy group of 4-diphosphocytidyl-2C-methyl-D-erythritol. This chain is 4-diphosphocytidyl-2-C-methyl-D-erythritol kinase, found in Shewanella woodyi (strain ATCC 51908 / MS32).